Here is a 149-residue protein sequence, read N- to C-terminus: SsrA-binding protein (149 aa).

Belongs to the SmpB family.

Its subcellular location is the cytoplasm. Required for rescue of stalled ribosomes mediated by trans-translation. Binds to transfer-messenger RNA (tmRNA), required for stable association of tmRNA with ribosomes. tmRNA and SmpB together mimic tRNA shape, replacing the anticodon stem-loop with SmpB. tmRNA is encoded by the ssrA gene; the 2 termini fold to resemble tRNA(Ala) and it encodes a 'tag peptide', a short internal open reading frame. During trans-translation Ala-aminoacylated tmRNA acts like a tRNA, entering the A-site of stalled ribosomes, displacing the stalled mRNA. The ribosome then switches to translate the ORF on the tmRNA; the nascent peptide is terminated with the 'tag peptide' encoded by the tmRNA and targeted for degradation. The ribosome is freed to recommence translation, which seems to be the essential function of trans-translation. The chain is SsrA-binding protein from Thermosipho africanus (strain TCF52B).